Here is a 430-residue protein sequence, read N- to C-terminus: CinA-like protein (430 aa).

The protein belongs to the CinA family.

The protein is CinA-like protein of Prochlorococcus marinus (strain NATL1A).